The following is a 70-amino-acid chain: Large ribosomal subunit protein eL38 (70 aa).

The protein belongs to the eukaryotic ribosomal protein eL38 family.

The chain is Large ribosomal subunit protein eL38 (RpL38) from Julodis onopordi (Jewel beetle).